The primary structure comprises 142 residues: Large ribosomal subunit protein uL13 (142 aa).

Belongs to the universal ribosomal protein uL13 family. In terms of assembly, part of the 50S ribosomal subunit.

In terms of biological role, this protein is one of the early assembly proteins of the 50S ribosomal subunit, although it is not seen to bind rRNA by itself. It is important during the early stages of 50S assembly. This Citrifermentans bemidjiense (strain ATCC BAA-1014 / DSM 16622 / JCM 12645 / Bem) (Geobacter bemidjiensis) protein is Large ribosomal subunit protein uL13.